Here is a 307-residue protein sequence, read N- to C-terminus: Regulating synaptic membrane exocytosis protein 3 (307 aa).

The interval Ser86 to Thr120 is disordered. A compositionally biased stretch (polar residues) spans Asp109–Gly119. Residues Pro155–Tyr273 enclose the C2 domain. Ser294 and Ser297 each carry phosphoserine.

As to quaternary structure, binds PPFIA3. Does not bind RAB3. As to expression, expressed exclusively in brain with significant levels in cortex, cerebellum and olfactory bulb. Detected at lower level in hippocampus.

It is found in the synapse. Functionally, regulates synaptic membrane exocytosis. This is Regulating synaptic membrane exocytosis protein 3 (Rims3) from Rattus norvegicus (Rat).